A 615-amino-acid polypeptide reads, in one-letter code: Protein DBF4 homolog B (615 aa).

A BRCT domain is found at 43–133; the sequence is ARKHPFSGKS…DPKGSHPRPS (91 aa). 2 disordered regions span residues 93–141 and 264–293; these read REVK…DSVP and FEAPTTLGSMHHTRESKDGEPSPRSAAHTM. The segment covering 275–284 has biased composition (basic and acidic residues); that stretch reads HTRESKDGEP. The DBF4-type zinc finger occupies 294-343; the sequence is PRRKKGYCECCQEAFEELHVHLQSAQHRSFALEAHLYAEVDRIIAQLSHS. The Zn(2+) site is built by Cys301, Cys304, His314, and His320. A disordered region spans residues 371–407; sequence TLHPHQPSHPRAASPRIRKEDSCQASVTQGRAAGQQR.

As to quaternary structure, forms a complex with CDC7. Note that CDC7 forms distinct complex either with DBF4/DBF4A or DBF4B. Such complexes are stable upon replication stress. Post-translationally, phosphorylated. As to expression, widely expressed. Highly expressed in testis.

The protein resides in the nucleus. Functionally, regulatory subunit for CDC7 which activates its kinase activity thereby playing a central role in DNA replication and cell proliferation. Required for progression of S and M phases. The complex CDC7-DBF4B selectively phosphorylates MCM2 subunit at 'Ser-40' and then is involved in regulating the initiation of DNA replication during cell cycle. The sequence is that of Protein DBF4 homolog B (DBF4B) from Homo sapiens (Human).